A 901-amino-acid polypeptide reads, in one-letter code: Alpha-actinin-3 (901 aa).

Met-1 carries the post-translational modification N-acetylmethionine. Positions 1-261 (MMMVMQPEGL…IMTYVSCFYH (261 aa)) are actin-binding. Calponin-homology (CH) domains follow at residues 45-149 (KQQR…LRFA) and 158-264 (TSAK…HAFA). Spectrin repeat units follow at residues 288 to 398 (KLME…WLLS), 408 to 513 (HLAE…ALER), 523 to 634 (RLQL…TLQE), and 644 to 747 (RLRR…EVEN). EF-hand domains lie at 760–795 (EQLNEFRASFNHFDRKQNGMMEPDDFRACLISMGYD) and 796–831 (LGEVEFARIMTMVDPNAAGVVTFQAFIDFMTRETAE). 6 residues coordinate Ca(2+): Asp-773, Asn-777, Met-779, Asp-784, Asp-809, and Asn-811.

This sequence belongs to the alpha-actinin family. In terms of assembly, homodimer; antiparallel. Also forms heterodimers with ACTN2. Interacts with MYOZ1. As to expression, expression restricted to fast (type 2) skeletal muscle fibers (at protein level).

In terms of biological role, F-actin cross-linking protein which is thought to anchor actin to a variety of intracellular structures. This is a bundling protein. This Homo sapiens (Human) protein is Alpha-actinin-3 (ACTN3).